The following is a 203-amino-acid chain: Glycerol-3-phosphate acyltransferase (203 aa).

4 helical membrane passes run 6–26 (LTLLMIVAAYLAGSVSSAVLV), 82–102 (AISLGLIAIAACLGHIYPIFF), 118–138 (APIGDDLAICLMASWVVLVLI), and 141–161 (YSSLAAIITALLAPLYTWWLD).

It belongs to the PlsY family. As to quaternary structure, probably interacts with PlsX.

Its subcellular location is the cell inner membrane. The catalysed reaction is an acyl phosphate + sn-glycerol 3-phosphate = a 1-acyl-sn-glycero-3-phosphate + phosphate. Its pathway is lipid metabolism; phospholipid metabolism. Its function is as follows. Catalyzes the transfer of an acyl group from acyl-phosphate (acyl-PO(4)) to glycerol-3-phosphate (G3P) to form lysophosphatidic acid (LPA). This enzyme utilizes acyl-phosphate as fatty acyl donor, but not acyl-CoA or acyl-ACP. The polypeptide is Glycerol-3-phosphate acyltransferase (Shewanella sp. (strain ANA-3)).